We begin with the raw amino-acid sequence, 1038 residues long: MEENTAQKQSNATGLQRHVSGRWISNVPSYEGNEWSSEESESEDKESNLTSSENIGKNPERELNSDGTDRIIEEEEEEDDIENEASSFSEQSENENYDFSYPGTFVYRKAASSSHETLATKVVSADESARLWAEKRRFLLQKLGKDPNSKPIDYKSSMASSSTRSSQSSQVSAIQPQSQDDNRVSDIRQMENRRELNVKRRSVSSPAEDLAIRPLSFSRYKKAEEIPESLPPIKGRDSFSSVRELNESNVFARAPNKNRFSFASVAETGSGSNFSRATSSRSSKTRSVVYEPNHRHTSFFGDTLSNLSSSLNDKKSPNDDHAVLDSELMEQTLPDSAEAVEIANNVKEDIVSTANDDANELDNTSEKATLETSSKPVTEQAIEQSEVVQEVEEGDTNMTTNTILKPTDEIINKGYAYSITSSHSNHSNEKFEQIPSPDEKLSRTDIDTHVKQLQTTKSTDSLSIPFVESPQQNPEEELSDSLSNDFGIDAEKEKDENLSKPEHHPSITSVNSPFLYSPSKQPSGELDEENLKLRLQDSDVDDEVATIRSLKQNNATNSEVETVTNDPSFSQQPGTHSRILRNFDAISSIDSIPDSFSDSAVDLPVDSSKYTLVGKTQSNSNLLQDNAEKHISKSNLEKVDVKGDTSPNSVEQGIEPQAASVVGSPRSSLVSNNSLEEGALLKNSESLESIYGYLSEEPDPALTKLNTEDPFWTKGSSDDEHTIASVEQDVYPYKTSLPTIVEATTSHTESSNSKAPAIEETTTTKVEVVAAHDAVSISSNSSTHKSHSEPLNRDELEVAALSRGSLPEPPKPNKQIVVQEEDQRDTLSLKTSTTGLSSHSKSAENNSTQQSTTSPSINSGASADAVSSGISKKADNSETNLNYFATLDAFVKSPLMSFDGLGELGSTDQRYNFFNQKIQEYSAYDSGLDNWIQFCLEKDGEAPKEAPPPPRSEPVSTTTKLAKRITQPSLSPARSTVTITHNIATEAKKKSKSAANDILHLFKKKAKSEQSNAKSSSSSIKESKKMKTLFGKKLGFKS.

The segment covering 1 to 14 (MEENTAQKQSNATG) has biased composition (polar residues). The disordered stretch occupies residues 1–100 (MEENTAQKQS…QSENENYDFS (100 aa)). Residues 58-71 (NPERELNSDGTDRI) are compositionally biased toward basic and acidic residues. The segment covering 72 to 83 (IEEEEEEDDIEN) has biased composition (acidic residues). A phosphoserine mark is found at serine 112, serine 113, and serine 114. 5 disordered regions span residues 144-201 (GKDP…VKRR), 360-381 (ELDN…TEQA), 422-441 (SHSN…DEKL), 454-526 (QTTK…SGEL), and 556-575 (TNSE…QPGT). Low complexity predominate over residues 156–179 (SSMASSSTRSSQSSQVSAIQPQSQ). Residues 180–198 (DDNRVSDIRQMENRRELNV) show a composition bias toward basic and acidic residues. Basic and acidic residues-rich tracts occupy residues 426-441 (HSNE…DEKL) and 489-505 (DAEK…EHHP). Serine 436 carries the post-translational modification Phosphoserine. Over residues 506-522 (SITSVNSPFLYSPSKQP) the composition is skewed to polar residues. Phosphoserine occurs at positions 618 and 856. 3 disordered regions span residues 803-864 (RGSL…ASAD), 940-974 (GEAP…SPAR), and 1005-1024 (KAKS…KESK). The segment covering 826–859 (TLSLKTSTTGLSSHSKSAENNSTQQSTTSPSINS) has biased composition (low complexity). The segment covering 955-974 (VSTTTKLAKRITQPSLSPAR) has biased composition (polar residues). Residues 1009–1020 (EQSNAKSSSSSI) are compositionally biased toward low complexity.

The protein resides in the cytoplasm. This is an uncharacterized protein from Schizosaccharomyces pombe (strain 972 / ATCC 24843) (Fission yeast).